Here is a 784-residue protein sequence, read N- to C-terminus: Toll-like receptor 2 (784 aa).

A signal peptide spans 1-20 (MPRALWTAWVWAVIILSTEG). Topologically, residues 21–587 (ASDQASSLSC…ARLSLSECHR (567 aa)) are extracellular. An intrachain disulfide couples Cys30 to Cys36. 19 LRR repeats span residues 54–77 (VKSL…RCVN), 78–101 (LKTL…HLRN), 102–125 (LEYL…SLYV), 126–150 (LKFL…HLPN), 151–175 (LRTL…GLTF), 176–199 (LEEL…SIQN), 200–223 (ISHL…IVSS), 224–250 (LDCF…MSTS), 251–278 (VKKL…YVSG), 279–308 (ILEV…HLGN), 309–337 (VETL…LTGR), 338–361 (VKRV…HLKS), 362–388 (LEYL…AWPF), 389–414 (LQTL…TLEN), 415–437 (LNNL…WPGK), 438–457 (MKQL…CLPQ), 458–478 (TLEI…ILPQ), 479–500 (LKEL…FLPV), and 501–524 (LSVM…SFQQ). Asn114 is a glycosylation site (N-linked (GlcNAc...) asparagine). A glycan (N-linked (GlcNAc...) asparagine) is linked at Asn199. The cysteines at positions 353 and 382 are disulfide-linked. Cys432 and Cys454 are joined by a disulfide. Residue Asn442 is glycosylated (N-linked (GlcNAc...) asparagine). The 55-residue stretch at 525–579 (LKTLEAGGNNFICSCDFLSFTQGQQALGRVLVDWPDDYRCDSPSHVRGQRVQDAR) folds into the LRRCT domain. Residues 588–608 (AAVVSAACCALFLLLLLTGVL) form a helical membrane-spanning segment. Over 609-784 (CHRFHGLWYM…WLNLRAAIRS (176 aa)) the chain is Cytoplasmic. Residues 639-782 (ICYDAFVSYS…GFWLNLRAAI (144 aa)) enclose the TIR domain. A Glycyl lysine isopeptide (Lys-Gly) (interchain with G-Cter in ubiquitin) cross-link involves residue Lys754. Positions 761 to 778 (YLEWPVDETQQEGFWLNL) match the ATG16L1-binding motif motif.

The protein belongs to the Toll-like receptor family. As to quaternary structure, interacts with LY96, TLR1 and TLR6 (via extracellular domain). TLR2 seems to exist in heterodimers with either TLR1 or TLR6 before stimulation by the ligand. The heterodimers form bigger oligomers in response to their corresponding ligands as well as further heterotypic associations with other receptors such as CD14 and/or CD36. Binds MYD88 (via TIR domain). Interacts with TICAM1. Interacts with CNPY3. Interacts with ATG16L1. Interacts with PPP1R11. Interacts with TICAM2. Interacts with TIRAP. Ubiquitinated at Lys-754 by PPP1R11, leading to its degradation. Deubiquitinated by USP2. In terms of processing, glycosylation of Asn-442 is critical for secretion of the N-terminal ectodomain of TLR2.

It localises to the membrane. Its subcellular location is the cytoplasmic vesicle. It is found in the phagosome membrane. The protein resides in the membrane raft. Functionally, cooperates with LY96 to mediate the innate immune response to bacterial lipoproteins and other microbial cell wall components. Cooperates with TLR1 or TLR6 to mediate the innate immune response to bacterial lipoproteins or lipopeptides. Acts via MYD88 and TRAF6, leading to NF-kappa-B activation, cytokine secretion and the inflammatory response. May also promote apoptosis in response to lipoproteins. Forms activation clusters composed of several receptors depending on the ligand, these clusters trigger signaling from the cell surface and subsequently are targeted to the Golgi in a lipid-raft dependent pathway. Forms the cluster TLR2:TLR6:CD14:CD36 in response to diacylated lipopeptides and TLR2:TLR1:CD14 in response to triacylated lipopeptides. This is Toll-like receptor 2 (TLR2) from Bos taurus (Bovine).